A 268-amino-acid polypeptide reads, in one-letter code: Glucosamine-6-phosphate deaminase (268 aa).

The active-site Proton acceptor; for enolization step is the Asp-72. The active-site For ring-opening step is the Asp-141. His-143 (proton acceptor; for ring-opening step) is an active-site residue. Glu-148 acts as the For ring-opening step in catalysis.

Belongs to the glucosamine/galactosamine-6-phosphate isomerase family. NagB subfamily. As to quaternary structure, homohexamer.

The enzyme catalyses alpha-D-glucosamine 6-phosphate + H2O = beta-D-fructose 6-phosphate + NH4(+). It functions in the pathway amino-sugar metabolism; N-acetylneuraminate degradation; D-fructose 6-phosphate from N-acetylneuraminate: step 5/5. Its activity is regulated as follows. Allosterically activated by N-acetylglucosamine 6-phosphate (GlcNAc6P). In terms of biological role, catalyzes the reversible isomerization-deamination of glucosamine 6-phosphate (GlcN6P) to form fructose 6-phosphate (Fru6P) and ammonium ion. This Histophilus somni (strain 129Pt) (Haemophilus somnus) protein is Glucosamine-6-phosphate deaminase.